A 565-amino-acid chain; its full sequence is Mediator of RNA polymerase II transcription subunit 1 (565 aa).

The disordered stretch occupies residues 141–170; that stretch reads SGNNLGSGNGTNGSSLTNKTDKKSVSSGNG.

It belongs to the Mediator complex subunit 1 family. As to quaternary structure, component of the Mediator complex.

It localises to the nucleus. Component of the Mediator complex, a coactivator involved in the regulated transcription of nearly all RNA polymerase II-dependent genes. Mediator functions as a bridge to convey information from gene-specific regulatory proteins to the basal RNA polymerase II transcription machinery. Mediator is recruited to promoters by direct interactions with regulatory proteins and serves as a scaffold for the assembly of a functional preinitiation complex with RNA polymerase II and the general transcription factors. The protein is Mediator of RNA polymerase II transcription subunit 1 (MED1) of Candida glabrata (strain ATCC 2001 / BCRC 20586 / JCM 3761 / NBRC 0622 / NRRL Y-65 / CBS 138) (Yeast).